A 43-amino-acid chain; its full sequence is Protein PsbN (43 aa).

Residues 5–27 form a helical membrane-spanning segment; that stretch reads TLVXISISGSLVSFTGYALYTAF.

Belongs to the PsbN family.

Its subcellular location is the plastid. The protein resides in the chloroplast thylakoid membrane. In terms of biological role, may play a role in photosystem I and II biogenesis. In Calycanthus floridus (Eastern sweetshrub), this protein is Protein PsbN.